The following is a 280-amino-acid chain: Tryptophan synthase alpha chain (280 aa).

Residues glutamate 49 and aspartate 60 each act as proton acceptor in the active site.

This sequence belongs to the TrpA family. In terms of assembly, tetramer of two alpha and two beta chains.

The catalysed reaction is (1S,2R)-1-C-(indol-3-yl)glycerol 3-phosphate + L-serine = D-glyceraldehyde 3-phosphate + L-tryptophan + H2O. The protein operates within amino-acid biosynthesis; L-tryptophan biosynthesis; L-tryptophan from chorismate: step 5/5. Functionally, the alpha subunit is responsible for the aldol cleavage of indoleglycerol phosphate to indole and glyceraldehyde 3-phosphate. The polypeptide is Tryptophan synthase alpha chain (Corynebacterium efficiens (strain DSM 44549 / YS-314 / AJ 12310 / JCM 11189 / NBRC 100395)).